A 354-amino-acid polypeptide reads, in one-letter code: Peptide chain release factor 1 (354 aa).

N5-methylglutamine is present on Gln230.

It belongs to the prokaryotic/mitochondrial release factor family. Post-translationally, methylated by PrmC. Methylation increases the termination efficiency of RF1.

It is found in the cytoplasm. Peptide chain release factor 1 directs the termination of translation in response to the peptide chain termination codons UAG and UAA. The protein is Peptide chain release factor 1 of Leptospira interrogans serogroup Icterohaemorrhagiae serovar copenhageni (strain Fiocruz L1-130).